Here is a 1092-residue protein sequence, read N- to C-terminus: Isoleucine--tRNA ligase (1092 aa).

A 'HIGH' region motif is present at residues 53-63 (PFANGLPHYGH). Residues 613–617 (KLSKR) carry the 'KMSKS' region motif. Residue K616 participates in ATP binding.

This sequence belongs to the class-I aminoacyl-tRNA synthetase family. IleS type 2 subfamily. Monomer. Zn(2+) serves as cofactor.

Its subcellular location is the cytoplasm. It carries out the reaction tRNA(Ile) + L-isoleucine + ATP = L-isoleucyl-tRNA(Ile) + AMP + diphosphate. In terms of biological role, catalyzes the attachment of isoleucine to tRNA(Ile). As IleRS can inadvertently accommodate and process structurally similar amino acids such as valine, to avoid such errors it has two additional distinct tRNA(Ile)-dependent editing activities. One activity is designated as 'pretransfer' editing and involves the hydrolysis of activated Val-AMP. The other activity is designated 'posttransfer' editing and involves deacylation of mischarged Val-tRNA(Ile). The chain is Isoleucine--tRNA ligase from Rickettsia peacockii (strain Rustic).